Consider the following 329-residue polypeptide: 1-phosphatidylinositol phosphodiesterase (329 aa).

The signal sequence occupies residues 1–31; the sequence is MSNKKLILKLFICSTIFITFVFALHDKRVVA. The PI-PLC X-box domain occupies 51-194; the sequence is NIPLARISIP…ARGKIVLLKR (144 aa). Residue histidine 63 is the Proton acceptor of the active site. The Proton donor role is filled by histidine 113.

It is found in the secreted. It catalyses the reaction a 1,2-diacyl-sn-glycero-3-phospho-(1D-myo-inositol) = 1D-myo-inositol 1,2-cyclic phosphate + a 1,2-diacyl-sn-glycerol. Cleaves glycosylphosphatidylinositol (GPI) and phosphatidylinositol (PI) anchors but not PI phosphates. The sequence is that of 1-phosphatidylinositol phosphodiesterase from Bacillus thuringiensis.